The primary structure comprises 252 residues: Ribosomal RNA small subunit methyltransferase J (252 aa).

S-adenosyl-L-methionine contacts are provided by residues 104-105 (RD), 120-121 (ER), 156-157 (SS), and D174.

This sequence belongs to the methyltransferase superfamily. RsmJ family.

It is found in the cytoplasm. It carries out the reaction guanosine(1516) in 16S rRNA + S-adenosyl-L-methionine = N(2)-methylguanosine(1516) in 16S rRNA + S-adenosyl-L-homocysteine + H(+). Specifically methylates the guanosine in position 1516 of 16S rRNA. The polypeptide is Ribosomal RNA small subunit methyltransferase J (Yersinia enterocolitica serotype O:8 / biotype 1B (strain NCTC 13174 / 8081)).